The chain runs to 141 residues: MQGALFIKPTILLPLPSSVSSPKLTFLLPHATKASRLSSLRSNNSSSSSSLTSDPNTVDYNSSILSVFPAEACEVISGYACSADIYPEVKLDTKPVSRPVASEPVDREYEEYNSPKTVFREEACDDLGGEFCEPDFQKDAN.

Residues 1 to 41 constitute a chloroplast transit peptide; it reads MQGALFIKPTILLPLPSSVSSPKLTFLLPHATKASRLSSLR. A compositionally biased stretch (low complexity) spans 35–51; sequence SRLSSLRSNNSSSSSSL. Residues 35–58 are disordered; sequence SRLSSLRSNNSSSSSSLTSDPNTV. The segment at 58–132 is 2 X 15 AA approximate repeats; that stretch reads VDYNSSILSV…ACDDLGGEFC (75 aa). Tandem repeats lie at residues 67–81 and 118–132.

As to quaternary structure, component of high molecular weight thylakoid LFNRs-containing protein complexes containing LIR1, LFNR1, LFNR2, TIC62 and TROL proteins. Interacts directly with LFNR1 and LFNR2; LIR1 increases the affinity of LFNR1 and LFNR2 for TIC62 and subsequent thylakoid relocalization. Post-translationally, may form interchain disulfide bonds with LFNR1 and LFNR2.

It is found in the plastid. The protein localises to the chloroplast thylakoid membrane. Its subcellular location is the chloroplast envelope. The protein resides in the chloroplast stroma. Functionally, thylakoid-determinant subunit of high molecular weight LFNRs-containing protein complexes. In Arabidopsis thaliana (Mouse-ear cress), this protein is Light-regulated protein 1, chloroplastic.